The chain runs to 461 residues: Argininosuccinate lyase (461 aa).

It belongs to the lyase 1 family. Argininosuccinate lyase subfamily.

It localises to the cytoplasm. The catalysed reaction is 2-(N(omega)-L-arginino)succinate = fumarate + L-arginine. The protein operates within amino-acid biosynthesis; L-arginine biosynthesis; L-arginine from L-ornithine and carbamoyl phosphate: step 3/3. This chain is Argininosuccinate lyase, found in Streptococcus gordonii (strain Challis / ATCC 35105 / BCRC 15272 / CH1 / DL1 / V288).